Here is a 392-residue protein sequence, read N- to C-terminus: Formate-dependent phosphoribosylglycinamide formyltransferase (392 aa).

N(1)-(5-phospho-beta-D-ribosyl)glycinamide is bound by residues 22-23 (EL) and glutamate 82. ATP contacts are provided by residues arginine 114, lysine 155, 160–165 (SSGKGQ), 195–198 (EGVV), and glutamate 203. An ATP-grasp domain is found at 119–308 (RLAAEELQLP…EFALHVRAFL (190 aa)). Glutamate 267 and glutamate 279 together coordinate Mg(2+). N(1)-(5-phospho-beta-D-ribosyl)glycinamide is bound by residues aspartate 286, lysine 355, and 362-363 (RR).

This sequence belongs to the PurK/PurT family. As to quaternary structure, homodimer.

It catalyses the reaction N(1)-(5-phospho-beta-D-ribosyl)glycinamide + formate + ATP = N(2)-formyl-N(1)-(5-phospho-beta-D-ribosyl)glycinamide + ADP + phosphate + H(+). It functions in the pathway purine metabolism; IMP biosynthesis via de novo pathway; N(2)-formyl-N(1)-(5-phospho-D-ribosyl)glycinamide from N(1)-(5-phospho-D-ribosyl)glycinamide (formate route): step 1/1. In terms of biological role, involved in the de novo purine biosynthesis. Catalyzes the transfer of formate to 5-phospho-ribosyl-glycinamide (GAR), producing 5-phospho-ribosyl-N-formylglycinamide (FGAR). Formate is provided by PurU via hydrolysis of 10-formyl-tetrahydrofolate. The sequence is that of Formate-dependent phosphoribosylglycinamide formyltransferase from Shigella boydii serotype 4 (strain Sb227).